A 525-amino-acid chain; its full sequence is Vesicular inhibitory amino acid transporter (525 aa).

Over 1–132 (MATLLRSKLS…WNVTNAIQGM (132 aa)) the chain is Cytoplasmic. Residues 69-111 (PCGDEGAEPPVEGDIHYQRGSGAPLPPSGSKDQVGAGGEFGGH) are disordered. The chain crosses the membrane as a helical span at residues 133–153 (FVLGLPYAILHGGYLGLFLII). The Lumenal, vesicle segment spans residues 154–204 (FAAVVCCYTGKILIACLYEENEDGEVVRVRDSYVAIANACCAPRFPTLGGR). At tyrosine 186 the chain carries 3'-nitrotyrosine. Residues 205-225 (VVNVAQIIELVMTCILYVVVS) form a helical membrane-spanning segment. Residues 226–265 (GNLMYNSFPGLPVSQKSWSIIATAVLLPCAFLKNLKAVSK) are Cytoplasmic-facing. A helical transmembrane segment spans residues 266–286 (FSLLCTLAHFVINILVIAYCL). At 287 to 305 (SRARDWAWEKVKFYIDVKK) the chain is on the lumenal, vesicle side. A helical membrane pass occupies residues 306–326 (FPISIGIIVFSYTSQIFLPSL). At 327–341 (EGNMQQPSEFHCMMN) the chain is on the cytoplasmic side. A helical transmembrane segment spans residues 342–362 (WTHIAACVLKGLFALVAYLTW). Over 363 to 383 (ADETKEVITDNLPGSIRAVVN) the chain is Lumenal, vesicle. A helical membrane pass occupies residues 384-404 (IFLVAKALLSYPLPFFAAVEV). At 405 to 438 (LEKSLFQEGSRAFFPACYGGDGRLKSWGLTLRCA) the chain is on the cytoplasmic side. The chain crosses the membrane as a helical span at residues 439-459 (LVVFTLLMAIYVPHFALLMGL). Residues 460 to 461 (TG) are Lumenal, vesicle-facing. Residues 462–482 (SLTGAGLCFLLPSLFHLRLLW) form a helical membrane-spanning segment. Residues 483–489 (RKLLWHQ) are Cytoplasmic-facing. The helical transmembrane segment at 490-510 (VFFDVAIFVIGGICSVSGFVH) threads the bilayer. Topologically, residues 511-525 (SLEGLIEAYRTNAED) are lumenal, vesicle.

The protein belongs to the amino acid/polyamine transporter 2 family.

Its subcellular location is the cytoplasmic vesicle membrane. The protein localises to the presynapse. The catalysed reaction is 4-aminobutanoate(out) + n H(+)(in) = 4-aminobutanoate(in) + n H(+)(out). It carries out the reaction glycine(out) + n H(+)(in) = glycine(in) + n H(+)(out). The enzyme catalyses beta-alanine(out) + n H(+)(in) = beta-alanine(in) + n H(+)(out). Antiporter that exchanges vesicular protons for cytosolic 4-aminobutanoate or to a lesser extend glycine, thus allowing their secretion from nerve terminals. The transport is equally dependent on the chemical and electrical components of the proton gradient. May also transport beta-alanine. Acidification of GABAergic synaptic vesicles is a prerequisite for 4-aminobutanoate uptake. In Macaca fascicularis (Crab-eating macaque), this protein is Vesicular inhibitory amino acid transporter.